Consider the following 1159-residue polypeptide: WASH complex subunit 5 (1159 aa).

S917 is subject to Phosphoserine.

The protein belongs to the strumpellin family. As to quaternary structure, component of the WASH core complex also described as WASH regulatory complex (SHRC) composed of WASH (WASHC1, WASH2P or WASH3P), WASHC2 (WASHC2A or WASHC2C), WASHC3, WASHC4 and WASHC5. The WASH core complex associates via WASHC2 with the F-actin-capping protein dimer (formed by CAPZA1, CAPZA2 or CAPZA3 and CAPZB) in a transient or substoichiometric manner which was initially described as WASH complex. Interacts with VCP, PI4K2A.

Its subcellular location is the cytoplasm. It is found in the cytosol. The protein localises to the endoplasmic reticulum. It localises to the early endosome. Functionally, acts as a component of the WASH core complex that functions as a nucleation-promoting factor (NPF) at the surface of endosomes, where it recruits and activates the Arp2/3 complex to induce actin polymerization, playing a key role in the fission of tubules that serve as transport intermediates during endosome sorting. May be involved in axonal outgrowth. Involved in cellular localization of ADRB2. Involved in cellular trafficking of BLOC-1 complex cargos such as ATP7A and VAMP7. This is WASH complex subunit 5 from Pongo abelii (Sumatran orangutan).